The following is a 239-amino-acid chain: Norbelladine 4'-O-methyltransferase 5 (239 aa).

S-adenosyl-L-methionine is bound by residues valine 55, glutamate 77, 79–80 (GV), serine 85, aspartate 103, and alanine 132. Aspartate 155 lines the a divalent metal cation pocket. Aspartate 157 serves as a coordination point for S-adenosyl-L-methionine. 2 residues coordinate a divalent metal cation: aspartate 181 and asparagine 182.

The protein belongs to the class I-like SAM-binding methyltransferase superfamily. Cation-dependent O-methyltransferase family. Requires Mg(2+) as cofactor.

It carries out the reaction norbelladine + S-adenosyl-L-methionine = 4'-O-methylnorbelladine + S-adenosyl-L-homocysteine + H(+). Its pathway is alkaloid biosynthesis. Functionally, 4'-O-methyltransferase converting norbelladine to 4'-O-methylnorbelladine. 4'-O-methylnorbelladine is a precursor to all Amaryllidaceae alkaloids such as galanthamine, lycorine and haemanthamine, and including haemanthamine- and crinamine-type alkaloids, promising anticancer agents. This is Norbelladine 4'-O-methyltransferase 5 from Narcissus aff. pseudonarcissus MK-2014 (Daffodil).